The primary structure comprises 520 residues: Bile acid--coenzyme A ligase (520 aa).

It belongs to the ATP-dependent AMP-binding enzyme family. In terms of assembly, homodimer. The cofactor is Mg(2+).

It carries out the reaction cholate + ATP + CoA = choloyl-CoA + AMP + diphosphate. The enzyme catalyses deoxycholate + ATP + CoA = deoxycholoyl-CoA + AMP + diphosphate. The catalysed reaction is chenodeoxycholate + ATP + CoA = chenodeoxycholoyl-CoA + AMP + diphosphate. It functions in the pathway lipid metabolism; bile acid biosynthesis. Inhibited by diphosphate. In terms of biological role, functions in the bile acid 7alpha-dehydroxylation pathway, which forms secondary bile acids via the 7alpha-dehydroxylation of primary bile acids, and is carried out by intestinal anaerobic bacteria. Catalyzes the initial step in this pathway, i.e. the ATP-dependent thioesterification of primary bile acids with coenzyme A. Is active with C-24 bile acids with free carboxyl groups such as cholate, deoxycholate and chenodeoxycholate. Produces AMP and pyrophosphate in addition to the bile acid-CoA thioester. The sequence is that of Bile acid--coenzyme A ligase from Clostridium scindens (strain JCM 10418 / VPI 12708).